Consider the following 430-residue polypeptide: Tol-Pal system protein TolB (430 aa).

Positions 1–21 (MKQALRVAFGFLILWASVLHA) are cleaved as a signal peptide.

This sequence belongs to the TolB family. As to quaternary structure, the Tol-Pal system is composed of five core proteins: the inner membrane proteins TolA, TolQ and TolR, the periplasmic protein TolB and the outer membrane protein Pal. They form a network linking the inner and outer membranes and the peptidoglycan layer.

It localises to the periplasm. Its function is as follows. Part of the Tol-Pal system, which plays a role in outer membrane invagination during cell division and is important for maintaining outer membrane integrity. TolB occupies a key intermediary position in the Tol-Pal system because it communicates directly with both membrane-embedded components, Pal in the outer membrane and TolA in the inner membrane. The protein is Tol-Pal system protein TolB of Shigella dysenteriae serotype 1 (strain Sd197).